Reading from the N-terminus, the 117-residue chain is MLMLSIMATIIFIITIVVMMLATLLSKKTLLDREKCSPFECGFDPMNSSRLPFALRFFLIAIIFLIFDVEIALLLPMVMIIKTSNLMNWTMTSFFFIFILLIGLYHEWNQGALEWNN.

The next 3 helical transmembrane spans lie at 1–21, 57–77, and 86–106; these read MLML…VMML, FFLI…LLPM, and LMNW…GLYH.

This sequence belongs to the complex I subunit 3 family.

The protein resides in the mitochondrion membrane. It carries out the reaction a ubiquinone + NADH + 5 H(+)(in) = a ubiquinol + NAD(+) + 4 H(+)(out). In terms of biological role, core subunit of the mitochondrial membrane respiratory chain NADH dehydrogenase (Complex I) that is believed to belong to the minimal assembly required for catalysis. Complex I functions in the transfer of electrons from NADH to the respiratory chain. The immediate electron acceptor for the enzyme is believed to be ubiquinone. This chain is NADH-ubiquinone oxidoreductase chain 3 (ND3), found in Anopheles quadrimaculatus (Common malaria mosquito).